The chain runs to 95 residues: Fluoride-specific ion channel FluC 1 (95 aa).

Transmembrane regions (helical) follow at residues 23–43, 49–69, and 70–90; these read LIDA…LMGW, LWGT…LLMF, and DGAY…WLLG. The Na(+) site is built by Gly56 and Thr59.

This sequence belongs to the fluoride channel Fluc/FEX (TC 1.A.43) family.

It is found in the cell membrane. The enzyme catalyses fluoride(in) = fluoride(out). Its activity is regulated as follows. Na(+) is not transported, but it plays an essential structural role and its presence is essential for fluoride channel function. Functionally, fluoride-specific ion channel. Important for reducing fluoride concentration in the cell, thus reducing its toxicity. The polypeptide is Fluoride-specific ion channel FluC 1 (Corynebacterium diphtheriae (strain ATCC 700971 / NCTC 13129 / Biotype gravis)).